Consider the following 465-residue polypeptide: ATP synthase subunit beta (465 aa).

154 to 161 contacts ATP; it reads GGAGVGKT.

It belongs to the ATPase alpha/beta chains family. As to quaternary structure, F-type ATPases have 2 components, CF(1) - the catalytic core - and CF(0) - the membrane proton channel. CF(1) has five subunits: alpha(3), beta(3), gamma(1), delta(1), epsilon(1). CF(0) has three main subunits: a(1), b(2) and c(9-12). The alpha and beta chains form an alternating ring which encloses part of the gamma chain. CF(1) is attached to CF(0) by a central stalk formed by the gamma and epsilon chains, while a peripheral stalk is formed by the delta and b chains.

Its subcellular location is the cell inner membrane. It carries out the reaction ATP + H2O + 4 H(+)(in) = ADP + phosphate + 5 H(+)(out). Functionally, produces ATP from ADP in the presence of a proton gradient across the membrane. The catalytic sites are hosted primarily by the beta subunits. The chain is ATP synthase subunit beta from Methylobacillus flagellatus (strain ATCC 51484 / DSM 6875 / VKM B-1610 / KT).